Reading from the N-terminus, the 372-residue chain is Alpha-1,3-mannosyl-glycoprotein 4-beta-N-acetylglucosaminyltransferase-like protein MGAT4D (372 aa).

Residues 1–8 (MKTKNVNL) are Cytoplasmic-facing. A helical; Signal-anchor for type II membrane protein membrane pass occupies residues 9-29 (LFALVAVLLFGFSCFCISRMN). Residues 30-372 (QTNNQLINCR…REQHLKDHYY (343 aa)) are Lumenal-facing. N-linked (GlcNAc...) asparagine glycosylation is found at Asn54 and Asn143.

The protein belongs to the glycosyltransferase 54 family. In terms of assembly, may self-associate; specifically in the endoplasmic reticulum prior to its translocation to the Golgi. Interacts with MGAT1, MGAT3 and MAN2A2; may interact with MGTA1 specifically in the Golgi. In terms of processing, N-glycosylated. O-glycosylated; further modified with terminal sialic acid residues. In terms of tissue distribution, testis.

It localises to the golgi apparatus membrane. The protein resides in the endoplasmic reticulum membrane. In terms of biological role, may play a role in male spermatogenesis. In vitro acts as inhibitor of MGAT1 activity causing cell surface proteins to carry mainly high mannose N-glycans. The function is mediated by its lumenal domain and occurs specifically in the Golgi. A catalytic glucosyltransferase activity is not detected. May be involved in regulation of Sertoli-germ cell interactions during specific stages of spermatogenesis. In Rattus norvegicus (Rat), this protein is Alpha-1,3-mannosyl-glycoprotein 4-beta-N-acetylglucosaminyltransferase-like protein MGAT4D.